Here is a 334-residue protein sequence, read N- to C-terminus: Chitin synthase export chaperone (334 aa).

7 consecutive transmembrane segments (helical) span residues 49-69 (IIFEGAASVMHIVALIMTVIM), 85-105 (ILSFFYLYMLLTAMSLIIDAG), 123-143 (GLSSAVITCLLINGFVGFQLY), 159-179 (LAAFAISFLVSLATFKSWAGL), 185-205 (VGLFVVLYLLNAVQLFVYVAM), 220-240 (LGDIAFGIFFFVAGQVLLYAF), and 244-264 (ICIAISHYLDGLFLATVCNLL).

This sequence belongs to the CHS7 family.

The protein resides in the endoplasmic reticulum membrane. Functionally, chaperone required for the export of the chitin synthase chs3 from the endoplasmic reticulum. Plays a critical role in cell wall integrity and virulence. The sequence is that of Chitin synthase export chaperone from Fusarium oxysporum f. sp. lycopersici (strain 4287 / CBS 123668 / FGSC 9935 / NRRL 34936) (Fusarium vascular wilt of tomato).